Reading from the N-terminus, the 114-residue chain is Amphinase-1 (114 aa).

The active-site Proton acceptor is H15. Cystine bridges form between C26–C79, C41–C85, C59–C100, and C97–C114. N-linked (GlcNAc...) asparagine glycosylation is present at N27. 42-46 contributes to the substrate binding site; that stretch reads KPVNT. N67 and N91 each carry an N-linked (GlcNAc...) asparagine glycan. The active-site Proton donor is the H107.

Belongs to the pancreatic ribonuclease family. As to quaternary structure, monomer. There are at least five different forms arising from glycan heterogeneity.

It is found in the secreted. Its function is as follows. Endonuclease, hydrolyzes highly polymerized RNA, poly(U) and poly(C), and the dinucleotides CpA and UpA. More active towards rCA than rUA or rUG. Has cytotoxic activity against cultured human submaxillary gland carcinoma cells. The polypeptide is Amphinase-1 (Lithobates pipiens (Northern leopard frog)).